Here is an 855-residue protein sequence, read N- to C-terminus: Inactive rhomboid protein 1 (855 aa).

A disordered region spans residues 1 to 36; it reads MSEARRDSTSSLQRKKPPWLKLDIPSAVPPTAEEPS. Residues 1–411 are Cytoplasmic-facing; the sequence is MSEARRDSTS…HRPFFTYWLT (411 aa). Residues Ser-76 and Ser-176 each carry the phosphoserine modification. Phosphothreonine occurs at positions 180 and 183. The residue at position 390 (Ser-390) is a Phosphoserine. Residues 412–432 form a helical membrane-spanning segment; sequence FVHSLVTILAVCIYGIAPVGF. The Lumenal portion of the chain corresponds to 433–655; it reads SQHETVDSVL…NPEVPDQFYR (223 aa). The N-linked (GlcNAc...) asparagine glycan is linked to Asn-583. A helical membrane pass occupies residues 656–676; that stretch reads LWLSLFLHAGILHCLVSICFQ. Over 677–691 the chain is Cytoplasmic; it reads MTVLRDLEKLAGWHR. A helical membrane pass occupies residues 692 to 712; sequence IAIIYLLSGVTGNLASAIFLP. Topologically, residues 713–714 are lumenal; the sequence is YR. A helical transmembrane segment spans residues 715–735; sequence AEVGPAGSQFGILACLFVELF. Topologically, residues 736-746 are cytoplasmic; the sequence is QSWQILARPWR. Residues 747 to 767 traverse the membrane as a helical segment; the sequence is AFFKLLAVVLFLFTFGLLPWI. Topologically, residues 768–772 are lumenal; sequence DNFAH. Residues 773–793 form a helical membrane-spanning segment; the sequence is ISGFISGLFLSFAFLPYISFG. The Cytoplasmic segment spans residues 794–803; it reads KFDLYRKRCQ. Residues 804–824 traverse the membrane as a helical segment; sequence IIIFQVVFLGLLAGLVVLFYF. Residues 825-855 are Lumenal-facing; sequence YPVRCEWCEFLTCIPFTDKFCEKYELDAQLH.

Belongs to the peptidase S54 family. Homodimer, or homooligomer. Interacts with TGFA and HBEGF. Interacts with EGF; may retain EGF in the endoplasmic reticulum and regulates its degradation through the endoplasmic reticulum-associated degradation (ERAD). Interacts (via cytoplasmic N-terminus) with FRMD8/iTAP; this interaction leads to mutual protein stabilization. Interacts with ADAM17/TACE.

The protein resides in the endoplasmic reticulum membrane. It localises to the golgi apparatus membrane. Its function is as follows. Regulates ADAM17 protease, a sheddase of the epidermal growth factor (EGF) receptor ligands and TNF, thereby plays a role in sleep, cell survival, proliferation, migration and inflammation. Does not exhibit any protease activity on its own. This Papio anubis (Olive baboon) protein is Inactive rhomboid protein 1 (RHBDF1).